The sequence spans 94 residues: Co-chaperonin GroES (94 aa).

This sequence belongs to the GroES chaperonin family. Heptamer of 7 subunits arranged in a ring. Interacts with the chaperonin GroEL.

The protein localises to the cytoplasm. Functionally, together with the chaperonin GroEL, plays an essential role in assisting protein folding. The GroEL-GroES system forms a nano-cage that allows encapsulation of the non-native substrate proteins and provides a physical environment optimized to promote and accelerate protein folding. GroES binds to the apical surface of the GroEL ring, thereby capping the opening of the GroEL channel. The sequence is that of Co-chaperonin GroES from Bacillus cytotoxicus (strain DSM 22905 / CIP 110041 / 391-98 / NVH 391-98).